A 761-amino-acid polypeptide reads, in one-letter code: Phosphoribosylformylglycinamidine synthase subunit PurL (761 aa).

Residues 1 to 16 (MTGNPAAPAATSVSPP) show a composition bias toward low complexity. A disordered region spans residues 1–21 (MTGNPAAPAATSVSPPAEQPY). Histidine 57 is a catalytic residue. Tyrosine 60 and lysine 101 together coordinate ATP. Residue glutamate 103 coordinates Mg(2+). Substrate-binding positions include 104-107 (SHNH) and arginine 126. Histidine 105 serves as the catalytic Proton acceptor. Aspartate 127 contacts Mg(2+). Position 252 (glutamine 252) interacts with substrate. Aspartate 280 is a binding site for Mg(2+). Substrate is bound at residue 329–331 (ESQ). 2 residues coordinate ATP: asparagine 519 and glycine 556. Position 557 (asparagine 557) interacts with Mg(2+). Serine 559 is a substrate binding site.

It belongs to the FGAMS family. As to quaternary structure, monomer. Part of the FGAM synthase complex composed of 1 PurL, 1 PurQ and 2 PurS subunits.

The protein resides in the cytoplasm. The catalysed reaction is N(2)-formyl-N(1)-(5-phospho-beta-D-ribosyl)glycinamide + L-glutamine + ATP + H2O = 2-formamido-N(1)-(5-O-phospho-beta-D-ribosyl)acetamidine + L-glutamate + ADP + phosphate + H(+). It participates in purine metabolism; IMP biosynthesis via de novo pathway; 5-amino-1-(5-phospho-D-ribosyl)imidazole from N(2)-formyl-N(1)-(5-phospho-D-ribosyl)glycinamide: step 1/2. Part of the phosphoribosylformylglycinamidine synthase complex involved in the purines biosynthetic pathway. Catalyzes the ATP-dependent conversion of formylglycinamide ribonucleotide (FGAR) and glutamine to yield formylglycinamidine ribonucleotide (FGAM) and glutamate. The FGAM synthase complex is composed of three subunits. PurQ produces an ammonia molecule by converting glutamine to glutamate. PurL transfers the ammonia molecule to FGAR to form FGAM in an ATP-dependent manner. PurS interacts with PurQ and PurL and is thought to assist in the transfer of the ammonia molecule from PurQ to PurL. The protein is Phosphoribosylformylglycinamidine synthase subunit PurL of Frankia casuarinae (strain DSM 45818 / CECT 9043 / HFP020203 / CcI3).